A 146-amino-acid polypeptide reads, in one-letter code: Hemoglobin subunit beta (146 aa).

The region spanning 2 to 146 (FLTAEEKGLV…VASALAHRYH (145 aa)) is the Globin domain. S44 carries the post-translational modification Phosphoserine. Residue K59 is modified to N6-acetyllysine. Residue H63 coordinates heme b. K82 carries the N6-acetyllysine modification. A heme b-binding site is contributed by H92. Residue C93 is modified to S-nitrosocysteine.

This sequence belongs to the globin family. In terms of assembly, heterotetramer of two alpha chains and two beta chains. As to expression, red blood cells.

Involved in oxygen transport from the lung to the various peripheral tissues. This Paguma larvata (Masked palm civet) protein is Hemoglobin subunit beta (HBB).